Here is a 57-residue protein sequence, read N- to C-terminus: UPF0391 membrane protein Xaut_1725 (57 aa).

Helical transmembrane passes span 4-24 (WAVT…GGIA) and 30-50 (IAKI…VAGL).

This sequence belongs to the UPF0391 family.

Its subcellular location is the cell membrane. This Xanthobacter autotrophicus (strain ATCC BAA-1158 / Py2) protein is UPF0391 membrane protein Xaut_1725.